The following is a 349-amino-acid chain: T-cell immunoglobulin and mucin domain-containing protein 2 (349 aa).

A signal peptide spans 1-20 (MVQLQVFISGLLLLLPGAVA). Over 21-275 (SYTVVQGHSV…QKLQRNPTKG (255 aa)) the chain is Extracellular. Residues 22-123 (YTVVQGHSVT…AFYFVDYLLE (102 aa)) enclose the Ig-like V-type domain. Intrachain disulfides connect cysteine 34–cysteine 107, cysteine 48–cysteine 59, and cysteine 54–cysteine 106. N-linked (GlcNAc...) asparagine glycans are attached at residues asparagine 84 and asparagine 89. A disordered region spans residues 128–271 (LPTSPPTRPT…AIPPQKLQRN (144 aa)). A compositionally biased stretch (low complexity) spans 136–215 (PTNTGRPTTT…TSTPPTPEQT (80 aa)). Positions 222–260 (ATTYYPDQTTAEVTEAPSHTPTDWNNTATSSDDSWNSDT) are enriched in polar residues. A helical membrane pass occupies residues 276–296 (FYVGMSFAALLLLLLASTVAI). At 297–349 (TRYMVMRKNSGSLRFVAFPVSKIGASQNKVVEQARIEDEVYIIEDSPYFEEES) the chain is on the cytoplasmic side.

Belongs to the immunoglobulin superfamily. TIM family. In terms of assembly, homodimer.

It is found in the cell membrane. Probable receptor for SEMA4A involved in the regulation of T-cell function. The interaction with SEMA4A enhances T-cell activation. In Rattus norvegicus (Rat), this protein is T-cell immunoglobulin and mucin domain-containing protein 2 (Timd2).